The sequence spans 339 residues: Transcription factor IIIA (339 aa).

9 C2H2-type zinc fingers span residues 12 to 36 (FICSFPDCNATYNKNRKLQAHLCKH), 42 to 66 (FPCTYEGCEKGFVTLHHLNRHVLSH), 72 to 97 (CKCETENCNLAFTTASNMRLHFKRAH), 104 to 128 (YVCYFADCGQQFRKHNQLKIHQYIH), 134 to 158 (FKCSHEGCDKCYASPSRLKRHEKTH), 161 to 187 (YPCRKDSTCPFVGKTWSDYMKHAAELH), 190 to 212 (VTCSICNRTFKRKSFLKEHKKIH), 219 to 244 (YRCPRENCDRTYTTKFNLKSHILTFH), and 250 to 274 (FVCEHEGCGKTFAMKQSLDRHFNTH). The segment at 271-339 (FNTHDPEKKK…LPVLENLTLK (69 aa)) is disordered. The span at 299 to 309 (KPKKSKKKKKP) shows a compositional bias: basic residues. The segment covering 311–323 (QTPAMESQEQQPD) has biased composition (polar residues).

The protein localises to the nucleus. Functionally, involved in ribosomal large subunit biogenesis. Interacts with the internal control region (ICR) of approximately 50 bases within the 5S RNA genes, is required for correct transcription of these genes by RNA polymerase III. Also binds the transcribed 5S RNA's. The sequence is that of Transcription factor IIIA (gtf3a) from Anaxyrus americanus (American toad).